Consider the following 39-residue polypeptide: Omega-theraphotoxin-Bs1b (39 aa).

3 cysteine pairs are disulfide-bonded: C4/C25, C8/C31, and C17/C36.

It belongs to the neurotoxin 12 (Hwtx-2) family. 06 (TXP1) subfamily. As to expression, expressed by the venom gland.

It localises to the secreted. Its function is as follows. Inhibits voltage-gated calcium channels (Cav) in rat cerebellar granule cells. Has insecticidal activity. The sequence is that of Omega-theraphotoxin-Bs1b from Brachypelma smithi (Mexican red knee tarantula).